An 81-amino-acid chain; its full sequence is RBAK downstream neighbor protein (81 aa).

Residues 1–22 (MWPPLLLLLLLLPAAPVPTAKA) form the signal peptide.

It localises to the secreted. The polypeptide is RBAK downstream neighbor protein (RBAKDN) (Homo sapiens (Human)).